Consider the following 659-residue polypeptide: Cytochrome bo(3) ubiquinol oxidase subunit 1 (659 aa).

Residues Met-1–Glu-14 lie on the Extracellular side of the membrane. A helical membrane pass occupies residues Pro-15 to Ile-35. The Cytoplasmic portion of the chain corresponds to Thr-36 to Ser-58. A helical transmembrane segment spans residues Ile-59–Met-79. 3 residues coordinate a ubiquinone: Arg-71, Asp-75, and His-98. Residues Arg-80 to His-106 are Extracellular-facing. His-106 lines the heme b pocket. Residues Gly-107–Val-127 form a helical membrane-spanning segment. Topologically, residues Pro-128–Ser-145 are cytoplasmic. Residues Phe-146–Ala-166 form a helical membrane-spanning segment. The Extracellular segment spans residues Gln-167–Tyr-189. A heme b-binding site is contributed by Trp-170. The chain crosses the membrane as a helical span at residues Trp-190–Ile-210. Over Thr-211–Met-225 the chain is Cytoplasmic. The helical transmembrane segment at Pro-226–Leu-246 threads the bilayer. Over Thr-247–Asn-277 the chain is Extracellular. Residues Leu-278 to Phe-298 traverse the membrane as a helical segment. Residue His-284 participates in Cu(2+) binding. Positions His-284–Tyr-288 form a cross-link, 1'-histidyl-3'-tyrosine (His-Tyr). Fe(II)-heme o is bound at residue Tyr-288. Topologically, residues Ser-299–Arg-309 are cytoplasmic. A helical transmembrane segment spans residues Leu-310–Val-330. The Extracellular segment spans residues Trp-331 to Phe-347. Positions 333 and 334 each coordinate Cu(2+). A helical transmembrane segment spans residues Phe-348–Phe-368. At Thr-369–Ser-380 the chain is on the cytoplasmic side. A helical transmembrane segment spans residues Met-381–Leu-401. Residues Ser-402 to Ser-413 are Extracellular-facing. Fe(II)-heme o contacts are provided by His-411 and His-419. A helical membrane pass occupies residues Leu-414–Ala-434. His-421 serves as a coordination point for heme b. Over Gly-435 to Ala-456 the chain is Cytoplasmic. The helical transmembrane segment at Phe-457 to Met-477 threads the bilayer. Residues Gly-478–Glu-490 lie on the Extracellular side of the membrane. 2 residues coordinate heme b: Arg-481 and Arg-482. The chain crosses the membrane as a helical span at residues Phe-491–Cys-511. The Cytoplasmic segment spans residues Gln-512–Ser-580. Residues Ala-581 to Phe-601 form a helical membrane-spanning segment. Topologically, residues Gly-602–Ala-605 are extracellular. A helical membrane pass occupies residues Val-606–Phe-626. At Lys-627–Lys-659 the chain is on the cytoplasmic side.

This sequence belongs to the heme-copper respiratory oxidase family. In terms of assembly, the cytochrome bo(3) ubiquinol oxidase complex is a heterooctamer of two A chains, two B chains, two C chains and two D chains. It depends on Cu(2+) as a cofactor. Heme b serves as cofactor. Fe(II)-heme o is required as a cofactor.

The protein resides in the cell membrane. The catalysed reaction is 2 a ubiquinol + O2 + n H(+)(in) = 2 a ubiquinone + 2 H2O + n H(+)(out). Cytochrome bo(3) ubiquinol oxidase is the terminal enzyme in the aerobic respiratory chain. Catalyzes the four-electron reduction of O2 to water, using a ubiquinol as a membrane soluble electron donor for molecular oxygen reduction. Has proton pump activity across the membrane in addition to electron transfer, pumping 2 protons/electron and generating a proton motive force. All the redox centers of this enzyme complex are located within the largest subunit, subunit I. Protons are probably pumped via D- and K- channels found in this subunit. This is Cytochrome bo(3) ubiquinol oxidase subunit 1 (cyoB) from Buchnera aphidicola subsp. Schizaphis graminum (strain Sg).